The following is a 337-amino-acid chain: DNA-directed RNA polymerase subunit alpha (337 aa).

The tract at residues 1 to 233 is alpha N-terminal domain (alpha-NTD); sequence MVREEVVGST…DLFIPFLHAE (233 aa). Positions 265–337 are alpha C-terminal domain (alpha-CTD); that stretch reads KEIALKCIFI…FAIDLPKNKF (73 aa).

It belongs to the RNA polymerase alpha chain family. As to quaternary structure, in plastids the minimal PEP RNA polymerase catalytic core is composed of four subunits: alpha, beta, beta', and beta''. When a (nuclear-encoded) sigma factor is associated with the core the holoenzyme is formed, which can initiate transcription.

The protein resides in the plastid. It localises to the chloroplast. It carries out the reaction RNA(n) + a ribonucleoside 5'-triphosphate = RNA(n+1) + diphosphate. Functionally, DNA-dependent RNA polymerase catalyzes the transcription of DNA into RNA using the four ribonucleoside triphosphates as substrates. This is DNA-directed RNA polymerase subunit alpha from Acorus calamus (Sweet flag).